Here is a 238-residue protein sequence, read N- to C-terminus: C-type lectin domain family 4 member A (238 aa).

Residues 1–48 (MASEITYAEVKFKNESNSLHTYSESPAAPREKPIRDLRKPGSPSLLLT) are Cytoplasmic-facing. Positions 5–10 (ITYAEV) match the ITIM motif motif. A helical; Signal-anchor for type II membrane protein membrane pass occupies residues 49-69 (SLMLLLLLLAITFLVAFIIYF). At 70–238 (QKYSQLLEEK…SVCQMKKINL (169 aa)) the chain is on the extracellular side. An N-linked (GlcNAc...) asparagine glycan is attached at Asn-91. Cys-107 and Cys-118 form a disulfide bridge. One can recognise a C-type lectin domain in the interval 126–233 (SSASWNKSEE…SLKQKSVCQM (108 aa)). Residues Asn-131 and Asn-136 are each glycosylated (N-linked (GlcNAc...) asparagine). Intrachain disulfides connect Cys-137–Cys-231 and Cys-205–Cys-223. 5 residues coordinate Ca(2+): Val-146, Glu-152, Glu-197, Ser-199, and Glu-203. Alpha-D-mannopyranose-binding positions include 197–199 (EPS) and Glu-203. 209–211 (IYR) contributes to the N-acetyl-D-glucosamine binding site. Ca(2+) is bound by residues Asn-219 and Asp-220.

In terms of assembly, may interact with PTPN6 via its ITIM site. Expressed in splenic antigen-presenting cells including B-cells, monocytes/macrophages, and dendritic cells (at protein level). Expressed in spleen and lymph node and slightly increased with dendritic cell maturation.

The protein resides in the cell membrane. In terms of biological role, may be involved in regulating immune reactivity. May play a role in modulating dendritic cells (DC) differentiation and/or maturation. May be involved in the inhibition of B-cell-receptor-mediated calcium mobilization and protein tyrosine phosphorylation. Its function is as follows. C-type lectin receptor that binds carbohydrates mannose and fucose but also weakly interacts with N-acetylglucosamine (GlcNAc) in a Ca(2+)-dependent manner. Involved in regulating immune reactivity. Once triggered by antigen, it is internalized by clathrin-dependent endocytosis and delivers its antigenic cargo into the antigen presentation pathway resulting in cross-priming of CD8(+) T cells. This cross-presentation and cross-priming are enhanced by TLR7 and TLR8 agonists with increased expansion of the CD8(+) T cells, high production of IFNG and TNF with reduced levels of IL4, IL5 and IL13. In plasmacytoid dendritic cells, inhibits TLR9-mediated IFNA and TNF production. May be involved via its ITIM motif (immunoreceptor tyrosine-based inhibitory motifs) in the inhibition of B-cell-receptor-mediated calcium mobilization and protein tyrosine phosphorylation. This is C-type lectin domain family 4 member A (Clec4a) from Mus musculus (Mouse).